We begin with the raw amino-acid sequence, 110 residues long: UPF0122 protein Sca_0859 (110 aa).

Belongs to the UPF0122 family.

In terms of biological role, might take part in the signal recognition particle (SRP) pathway. This is inferred from the conservation of its genetic proximity to ftsY/ffh. May be a regulatory protein. The sequence is that of UPF0122 protein Sca_0859 from Staphylococcus carnosus (strain TM300).